The sequence spans 935 residues: MNLGDGLKLETELLDGKTKLILSPYEHKSKVSVKMGNKFKIAKCPLRTKQTGHTLKSTQNTYIGNENLSQKKISTLDTSQAKPENSRLTFSPSTDKQYSEKDSVRVQKEISPTTSNIRKIINTTGTCPVAKQKPCKKNPTAETMNSGLVCLTQDQLRQILMLSVNQGNGSVCLTETGEEEASQDSLHLINIPSQPKDVNDTGFLQNTEAASPVTSEHEHVHRRAQEAFQQCEQKAATENEWKPADIFSTLGERERDKSLLEARRAQWKKELDEQVALKKKEKEASQKWHNPWKPSDIECEKSQVHDQSKEARLLESPCSAIKQEQQRKWIEELNKQVEDDQQRKAEERMIYSKGEEHDRWAVHFDSLKSHPGSQSRLSSQLTHQHLESLCVSPDTQELADVNGVFTPPPGVQAEPSEKEQRARPVLEMAVSHGPKTNFLRSMTALLDPAQIEERERRRQKQLEHQKAIMAQVEENRRKKRLEEEQRKKEEQELELRLAREREEMQRQYEEDILKQRQREEIMTLKTNELFHTMQRAQELAQRLKQEQRIRELAQKGHDTSRLIQNLGAQVDYKAFTTISSSHSDPEETADTSTASPKKDTGVQTDDVNLGIFNDALPPCGSVTEKGIRNISSPEISAEFSGQTDIRKENQELSMNKGTNLDKENSWHNGQCNQYRRTEKQTKLMKKCPKKPAWNINKPLKKYVPASAKYPAHLQKEKEEKKVQRQMELLHLVERNNPENLSQNRGISPLATSHRETESESRLHLIKKVEEPLKTPSVSKERFQTSPAVKNRTQQTQSNVLHLPLKNNDYEKETLTLGDGHTKLSDEMSEPSHFIPYVRTNEIYYLDPDAPLSRPSTQDNQYQKSHDCAREQELFDSDHIRDPLLNPKLVKNRDRQQAILKGLSELRQGLLQKQKELETNLIPLTANQEDNFSSSF.

Residues 76 to 96 show a composition bias toward polar residues; the sequence is LDTSQAKPENSRLTFSPSTDK. Residues 76 to 103 are disordered; it reads LDTSQAKPENSRLTFSPSTDKQYSEKDS. Position 114 is a phosphothreonine (Thr114). Ser366 bears the Phosphoserine mark. Residues 462 to 555 adopt a coiled-coil conformation; sequence LEHQKAIMAQ…EQRIRELAQK (94 aa). Disordered regions lie at residues 470–491, 577–602, and 738–794; these read AQVE…KEEQ, TISS…DTGV, and ENLS…RTQQ. Residues 473–491 show a composition bias toward basic and acidic residues; that stretch reads EENRRKKRLEEEQRKKEEQ. The interval 567-935 is mediates localization to cilia, centrosomes and spindle microtubules and the interaction with PCM1, CEP290, CEP104 and CSPP1; that stretch reads GAQVDYKAFT…NQEDNFSSSF (369 aa). Polar residues predominate over residues 590 to 602; sequence DTSTASPKKDTGV. Phosphoserine is present on Ser595. Residues 752-782 are compositionally biased toward basic and acidic residues; it reads SHRETESESRLHLIKKVEEPLKTPSVSKERF. A compositionally biased stretch (polar residues) spans 783-794; the sequence is QTSPAVKNRTQQ.

Homodimer; disulfide-linked. Interacts with CEP290. Interacts with PCM1. Interacts with ARMC9, TOGARAM1, CSPP1 and CEP104. Interacts with CDK5RAP2, CEP152, CEP192, TBG1 and PRC1. Widely expressed. Expressed in retina by rod photoreceptors but also detected in outer plexiform and ganglion cell layers (at protein level).

Its subcellular location is the cytoplasm. The protein localises to the cytoskeleton. The protein resides in the microtubule organizing center. It localises to the centrosome. It is found in the centriolar satellite. Its subcellular location is the cell projection. The protein localises to the cilium. The protein resides in the cilium basal body. It localises to the cilium axoneme. It is found in the photoreceptor inner segment. Its subcellular location is the photoreceptor outer segment. Functionally, microtubule-binding protein required for ciliogenesis. May function in ciliogenesis by mediating the transport of proteins like BBS4 to the cilium, but also through the organization of the centriolar satellites. Required for the assembly of signaling-competent cilia with proper structure and length. Mediates this function in part by regulating transition zone assembly and basal body recruitment of the IFT-B complex. Cooperates with the ciliopathy proteins CSPP1 and CEP104 during cilium length regulation. Plays two important roles during cell division. First, is required for mitotic progression via regulation of spindle assembly, organization and orientation, levels of spindle microtubules (MTs), kinetochore-fiber integrity, and chromosome alignment. Second, functions during cytokinesis in part by regulating assembly and organization of central spindle and midbody MTs. Plays a role in retina morphogenesis and/or homeostasis. This Mus musculus (Mouse) protein is Coiled-coil domain-containing protein 66.